The following is a 192-amino-acid chain: MYQIVLGKVSTLSAGQLPDALIAQAPQGVRRASWLAGRVLLSRALSPLPEMVYGEQGKPAFSAGTPLWFNLSHSGDTIALLLSDEGEVGCDIEVIRPRDNWRSLANAVFSLGEHAEMEAERPERQLAAFWRIWTRKEAIVKQRGGSAWQIVSVDSTLPSALSVSQCQLDTLSLAVCTPTPFTLTPQTITKAL.

Belongs to the P-Pant transferase superfamily. Gsp/Sfp/HetI/AcpT family.

The catalysed reaction is apo-[ACP] + CoA = holo-[ACP] + adenosine 3',5'-bisphosphate + H(+). May be involved in an alternative pathway for phosphopantetheinyl transfer and holo-ACP synthesis. The native apo-protein substrate is unknown. This Salmonella typhi protein is 4'-phosphopantetheinyl transferase AcpT (acpT).